Reading from the N-terminus, the 158-residue chain is Small ribosomal subunit protein uS7 (158 aa).

The protein belongs to the universal ribosomal protein uS7 family. In terms of assembly, part of the 30S ribosomal subunit. Contacts proteins S9 and S11.

Functionally, one of the primary rRNA binding proteins, it binds directly to 16S rRNA where it nucleates assembly of the head domain of the 30S subunit. Is located at the subunit interface close to the decoding center, probably blocks exit of the E-site tRNA. In Flavobacterium psychrophilum (strain ATCC 49511 / DSM 21280 / CIP 103535 / JIP02/86), this protein is Small ribosomal subunit protein uS7.